The following is a 412-amino-acid chain: MISQIDKTELLERFLHYVSFHTQSKPNAKHSPSSVGQMKLAMQLQKELIQFGLENVEVSKYAVVTAFLPANDPNLTKTIGLVAHLDTSPQCSGKNVRLEVIEEYRGGDIALGIGEEFISPVYYSFMQKLVGQTLIVTDGTTLLGADNKAGIAEIMTALSILQKENIPHCNIRVAFTPDEEIGLGIHYFPMEKFSCDWAYTIDGGEVGELEYENFNAATAKVRFFGRNIHTGYAKGKMLNALTLACEFQQVFPVDEVPEKTDGKAGFYHLEDFFGDIEQVELTYLIRDFDEQNFAQRKAFIKNQVEKFNAKKGLKKPIELEIQDSYQNMYDVVKNVPQSIELADRAMKAVGIKPNHKPIRGGTDGAFLASKGLACPNIFTGGYNFHSKHELVSLQGMENTVQVIIEMLKCKDL.

Position 84 (His84) interacts with Zn(2+). Residue Asp86 is part of the active site. Asp146 serves as a coordination point for Zn(2+). The Proton acceptor role is filled by Glu179. Zn(2+) is bound by residues Glu180, Asp202, and His385.

This sequence belongs to the peptidase M20B family. Zn(2+) is required as a cofactor.

Its subcellular location is the cytoplasm. It carries out the reaction Release of the N-terminal residue from a tripeptide.. Its function is as follows. Cleaves the N-terminal amino acid of tripeptides. The polypeptide is Peptidase T (Haemophilus influenzae (strain PittEE)).